Here is a 413-residue protein sequence, read N- to C-terminus: CinA-like protein (413 aa).

Belongs to the CinA family.

The chain is CinA-like protein from Desulfotalea psychrophila (strain LSv54 / DSM 12343).